The following is a 126-amino-acid chain: MYNAKTKKKRKNITLGIVYIKSTFNNTIVTFTDMQGNAIAALSAGAIGFKGAKKATPYAAQVIVEKVSEVAKEHGIKTLSIRIQGAGSQRESALRAIFNQNFIVTSITDTSPVAHNGCRPPKKRRV.

The protein belongs to the universal ribosomal protein uS11 family. As to quaternary structure, part of the 30S ribosomal subunit. Interacts with proteins S7 and S18. Binds to IF-3.

Functionally, located on the platform of the 30S subunit, it bridges several disparate RNA helices of the 16S rRNA. Forms part of the Shine-Dalgarno cleft in the 70S ribosome. This is Small ribosomal subunit protein uS11 from Orientia tsutsugamushi (strain Boryong) (Rickettsia tsutsugamushi).